A 363-amino-acid chain; its full sequence is DNA replication and repair protein RecF (363 aa).

Position 30-37 (30-37 (GSNGSGKT)) interacts with ATP.

This sequence belongs to the RecF family.

The protein localises to the cytoplasm. Its function is as follows. The RecF protein is involved in DNA metabolism; it is required for DNA replication and normal SOS inducibility. RecF binds preferentially to single-stranded, linear DNA. It also seems to bind ATP. The protein is DNA replication and repair protein RecF of Photorhabdus laumondii subsp. laumondii (strain DSM 15139 / CIP 105565 / TT01) (Photorhabdus luminescens subsp. laumondii).